A 329-amino-acid chain; its full sequence is Phosphoenolpyruvate transferase (329 aa).

D61 provides a ligand contact to 7,8-didemethyl-8-hydroxy-5-deazariboflavin.

This sequence belongs to the CofD family. As to quaternary structure, homodimer. Mg(2+) serves as cofactor.

The catalysed reaction is enolpyruvoyl-2-diphospho-5'-guanosine + 7,8-didemethyl-8-hydroxy-5-deazariboflavin = dehydro coenzyme F420-0 + GMP + H(+). It functions in the pathway cofactor biosynthesis; coenzyme F420 biosynthesis. In terms of biological role, catalyzes the transfer of the phosphoenolpyruvate moiety from enoylpyruvoyl-2-diphospho-5'-guanosine (EPPG) to 7,8-didemethyl-8-hydroxy-5-deazariboflavin (FO) with the formation of dehydro coenzyme F420-0 and GMP. In Mycobacterium ulcerans (strain Agy99), this protein is Phosphoenolpyruvate transferase.